A 774-amino-acid chain; its full sequence is Lon protease 1 (774 aa).

The 194-residue stretch at 9 to 202 (IPLLPLRGLL…KVIDFINNEK (194 aa)) folds into the Lon N-terminal domain. 354-361 (GPPGVGKT) serves as a coordination point for ATP. One can recognise a Lon proteolytic domain in the interval 590–771 (EDQVGVVTGL…DEVLEHALVG (182 aa)). Catalysis depends on residues Ser-677 and Lys-720.

This sequence belongs to the peptidase S16 family. Homohexamer. Organized in a ring with a central cavity. Exists as a mixture of small oligomeric species in solution.

The protein resides in the cytoplasm. The catalysed reaction is Hydrolysis of proteins in presence of ATP.. In terms of biological role, ATP-dependent serine protease that mediates the selective degradation of mutant and abnormal proteins as well as certain short-lived regulatory proteins. Required for cellular homeostasis and for survival from DNA damage and developmental changes induced by stress. Degrades polypeptides processively to yield small peptide fragments that are 5 to 10 amino acids long. Binds to DNA in a double-stranded, site-specific manner. Has been implicated in preventing sigma(G) activity under non-sporulation conditions. This Bacillus subtilis (strain 168) protein is Lon protease 1.